We begin with the raw amino-acid sequence, 397 residues long: Phosphoglycerate kinase (397 aa).

Substrate-binding positions include 25–27, Arg41, 64–67, Arg118, and Arg151; these read DLN and HLGR. ATP-binding positions include Lys202, Glu324, and 350–353; that span reads GGDT.

The protein belongs to the phosphoglycerate kinase family. Monomer.

It localises to the cytoplasm. It carries out the reaction (2R)-3-phosphoglycerate + ATP = (2R)-3-phospho-glyceroyl phosphate + ADP. It participates in carbohydrate degradation; glycolysis; pyruvate from D-glyceraldehyde 3-phosphate: step 2/5. The sequence is that of Phosphoglycerate kinase from Herminiimonas arsenicoxydans.